The sequence spans 205 residues: Isochorismatase domain-containing protein 2 (205 aa).

2 positions are modified to phosphoserine: serine 7 and serine 202.

The protein belongs to the isochorismatase family. As to quaternary structure, interacts with CDKN2A.

The protein localises to the cytoplasm. Its subcellular location is the nucleus. In Homo sapiens (Human), this protein is Isochorismatase domain-containing protein 2 (ISOC2).